Here is a 272-residue protein sequence, read N- to C-terminus: NADPH-dependent aldehyde reductase 2, chloroplastic (272 aa).

A chloroplast-targeting transit peptide spans M1–E53. Residue R26–S50 participates in NADP(+) binding. Substrate is bound at residue S165. Y179 acts as the Proton acceptor in catalysis.

It belongs to the short-chain dehydrogenases/reductases (SDR) family.

Its subcellular location is the plastid. It is found in the chloroplast. In terms of biological role, aldehyde reductase that catalyzes the reduction of the aldehyde carbonyl groups on saturated and alpha,beta-unsaturated aldehydes with more than 5 carbons. No activity on alpha,beta-unsaturated ketones. Can use propionaldehyde, butyraldehyde, methylglyoxal, (e)-2-pentenal, (E)-2-hexenal, (Z)-3-hexenal and (E)-2-nonenal as substrates, but not propenal (acrolein), crotonaldehyde, 2-butanone, 3-buten-2-one or 1-penten-3-one. The polypeptide is NADPH-dependent aldehyde reductase 2, chloroplastic (Arabidopsis thaliana (Mouse-ear cress)).